The primary structure comprises 490 residues: NADP-reducing hydrogenase subunit HndC (490 aa).

4Fe-4S ferredoxin-type domains are found at residues 433–462 and 463–490; these read LTYTIDPAKCTGCGLCTRVCPVECISGTKK and QPHTIDTTRCIKCGACYDKCKFDSIIKQ.

The protein belongs to the complex I 51 kDa subunit family. As to quaternary structure, heterotetramer composed of HndA, HndB, HndC and HndD subunits. HndC is probably the reducing subunit.

It catalyses the reaction H2 + NADP(+) = NADPH + H(+). Its activity is regulated as follows. Inhibited by oxygen. Its function is as follows. Catalyzes the reduction of NADP in the presence of molecular H2 to yield NADPH. This is NADP-reducing hydrogenase subunit HndC (hndC) from Solidesulfovibrio fructosivorans (Desulfovibrio fructosivorans).